A 164-amino-acid chain; its full sequence is 6,7-dimethyl-8-ribityllumazine synthase (164 aa).

5-amino-6-(D-ribitylamino)uracil-binding positions include Tyr-27, 58–60 (ALE), and 87–89 (CVI). 92–93 (ET) contacts (2S)-2-hydroxy-3-oxobutyl phosphate. His-95 serves as the catalytic Proton donor. Asn-120 serves as a coordination point for 5-amino-6-(D-ribitylamino)uracil. Arg-134 is a binding site for (2S)-2-hydroxy-3-oxobutyl phosphate.

It belongs to the DMRL synthase family.

The enzyme catalyses (2S)-2-hydroxy-3-oxobutyl phosphate + 5-amino-6-(D-ribitylamino)uracil = 6,7-dimethyl-8-(1-D-ribityl)lumazine + phosphate + 2 H2O + H(+). It functions in the pathway cofactor biosynthesis; riboflavin biosynthesis; riboflavin from 2-hydroxy-3-oxobutyl phosphate and 5-amino-6-(D-ribitylamino)uracil: step 1/2. Catalyzes the formation of 6,7-dimethyl-8-ribityllumazine by condensation of 5-amino-6-(D-ribitylamino)uracil with 3,4-dihydroxy-2-butanone 4-phosphate. This is the penultimate step in the biosynthesis of riboflavin. The chain is 6,7-dimethyl-8-ribityllumazine synthase from Methylocella silvestris (strain DSM 15510 / CIP 108128 / LMG 27833 / NCIMB 13906 / BL2).